The chain runs to 387 residues: Putative transposase y4pF/y4sB (387 aa).

The protein belongs to the transposase 20 family.

This chain is Putative transposase y4pF/y4sB, found in Sinorhizobium fredii (strain NBRC 101917 / NGR234).